Consider the following 2843-residue polypeptide: Adenomatous polyposis coli protein (2843 aa).

Alanine 2 is subject to N-acetylalanine. Residues 2–61 (AAASYDQLLKQVEALKMENSNLRQELEDNSNHLTKLETEASNMKEVLKQLQGSIEDEAMA) are a coiled coil. Phosphoserine is present on residues serine 107 and serine 111. Positions 127 to 248 (SRESTGYLEE…ATEAERSSQN (122 aa)) form a coiled coil. Residues 239 to 305 (ATEAERSSQN…STHSAPRRLT (67 aa)) are disordered. The segment covering 241 to 261 (EAERSSQNKHETGSHDAERQN) has biased composition (basic and acidic residues). Positions 271 to 282 (MATSGNGQGSTT) are enriched in polar residues. Over residues 290–299 (SVLSSSSTHS) the composition is skewed to low complexity. ARM repeat units lie at residues 453 to 495 (LMKL…HYSI), 505 to 547 (LTNL…IASV), 548 to 591 (LRNL…VLSA), 592 to 638 (LWNL…GGGI), 639 to 683 (LRNV…ACGT), 684 to 725 (LWNL…SAAA), and 726 to 767 (LRNL…LDAQ). 3 positions are modified to phosphoserine: serine 744, serine 748, and serine 780. The disordered stretch occupies residues 828–878 (TTVLPSSSSSRGSLDSSRSEKDRSLERERGIGLGNYHPATENPGTSSKRGL). Residues 833 to 843 (SSSSSRGSLDS) show a composition bias toward low complexity. Over residues 844-857 (SRSEKDRSLERERG) the composition is skewed to basic and acidic residues. Residues 869–878 (NPGTSSKRGL) show a composition bias toward polar residues. Serine 908 carries the phosphoserine modification. Disordered stretches follow at residues 923–943 (RRSSAAHTHSNTYNFTKSENS) and 958–987 (RSSNDSLNSVSSSDGYGKRGQMKPSIESYS). Positions 927 to 943 (AAHTHSNTYNFTKSENS) are enriched in polar residues. Residues 960–1337 (SNDSLNSVSS…QHPRTKSSRL (378 aa)) are responsible for down-regulation through a process mediated by direct ubiquitination. The segment covering 961 to 971 (NDSLNSVSSSD) has biased composition (low complexity). Residues serine 987, serine 1038, and serine 1042 each carry the phosphoserine modification. The tract at residues 1020–1169 (ELDTPINYSL…TNYSIKYNEE (150 aa)) is interaction with catenins. Disordered regions lie at residues 1099–1169 (VSPY…YNEE), 1190–1244 (SQKQ…GQPQ), and 1311–1376 (IGTR…PEHY). Polar residues predominate over residues 1107 to 1130 (ANGSETNRVGSNHGINQNVSQSLC). Residues 1146–1159 (RYSEEEQHEEEERP) show a composition bias toward basic and acidic residues. The span at 1190 to 1224 (SQKQSFSFSKSSSGQSSKTEHMSSSSENTSTPSSN) shows a compositional bias: low complexity. Residues 1225–1244 (AKRQNQLHPSSAQSRSGQPQ) are compositionally biased toward polar residues. 2 stretches are compositionally biased toward low complexity: residues 1335–1345 (SRLQGSSLSSE) and 1355–1366 (SSGAKSPSKSGA). Residues serine 1360, serine 1371, serine 1385, serine 1392, and serine 1395 each carry the phosphoserine modification. Disordered stretches follow at residues 1403–1475 (SSVQ…VNAA), 1526–1569 (PPVQ…DSDD), 1583–1611 (MPTKSSRKAKKPAQTASKLPPPVARKPSQ), 1664–1717 (SPPN…DDNK), and 1729–1836 (NSAM…RVRG). Position 1438 is a phosphothreonine (threonine 1438). 2 stretches are compositionally biased toward basic and acidic residues: residues 1448–1466 (TKREVPKNKAPTAEKRESG) and 1540–1564 (EQPKESNENQEKEAEKTIDSEKDLL). Residue serine 1567 is modified to Phosphoserine. A compositionally biased stretch (basic and acidic residues) spans 1683 to 1698 (EFEKRDTIPTEGRSTD). A compositionally biased stretch (basic residues) spans 1735 to 1744 (GKSHKPFRVK). Phosphoserine is present on serine 1774. Basic and acidic residues-rich tracts occupy residues 1785-1794 (YRTRVRKNAD) and 1804-1813 (VFSDNKDSKK). 3 positions are modified to phosphoserine: serine 1861, serine 1863, and serine 1864. The interval 1866–1893 (DFDDDDVDLSREKAELRKAKENKESEAK) is highly charged. Residues 1881–1896 (LRKAKENKESEAKVTS) show a composition bias toward basic and acidic residues. Disordered stretches follow at residues 1881–1950 (LRKA…TDEK), 1965–2011 (HNSS…APKS), and 2043–2072 (ISSAMPKKKKPSRLKGDNEKHSPRNMGGIL). Composition is skewed to polar residues over residues 1897–1913 (HTELTSNQQSANKTQAI) and 1928–1938 (QKQSTFPQSSK). Residues 1939-1950 (DIPDRGAATDEK) show a composition bias toward basic and acidic residues. A phosphoserine mark is found at serine 1971 and serine 1973. The segment covering 1979-1991 (NNNKENEPIKETE) has biased composition (basic and acidic residues). An interaction with AXIN1 region spans residues 2035–2059 (EDDLLQECISSAMPKKKKPSRLKGD). Phosphoserine is present on residues serine 2088, serine 2093, serine 2125, serine 2129, serine 2130, and serine 2132. Disordered stretches follow at residues 2147–2635 (PFHL…SGAT) and 2667–2714 (NNPR…VPMR). Threonine 2151 is modified (phosphothreonine). Residues 2167-2674 (ILKPGEKSTL…PINNPRSGRS (508 aa)) form a basic region region. Basic and acidic residues predominate over residues 2169 to 2187 (KPGEKSTLETKKIESESKG). Composition is skewed to polar residues over residues 2203 to 2223 (VRSNSEISGQMKQPLQANMPS) and 2257 to 2271 (ASKSPSEGQTATTSP). Residues serine 2260, serine 2270, and serine 2283 each carry the phosphoserine modification. Positions 2286–2331 (ARQTSQIGGSSKAPSRSGSRDSTPSRPAQQPLSRPIQSPGRNSISP) are enriched in polar residues. Positions 2348–2369 (TSSPSTASTKSSGSGKMSYTSP) are enriched in low complexity. Composition is skewed to polar residues over residues 2370–2409 (GRQMSQQNLTKQTGLSKNASSIPRSESASKGLNQMNNGNG) and 2418–2427 (RMSSTKSSGS). The span at 2459–2477 (SASFESLSPSSRPASPTRS) shows a compositional bias: low complexity. A phosphoserine mark is found at serine 2473 and serine 2535. The interaction with DLG1 stretch occupies residues 2475-2843 (TRSQAQTPVL…HSGSYLVTSV (369 aa)). Residues 2518–2535 (NDGRPAKRHDIARSHSES) show a composition bias toward basic and acidic residues. The span at 2555–2568 (SSSLPRVSTWRRTG) shows a compositional bias: polar residues. Residue serine 2569 is modified to Phosphoserine. A compositionally biased stretch (low complexity) spans 2569–2579 (SSSSILSASSE). Positions 2580–2592 (SSEKAKSEDEKHV) are enriched in basic and acidic residues. Polar residues-rich tracts occupy residues 2593 to 2608 (NSISGTKQSKENQVSA), 2620 to 2635 (FSPTNSTSQTVSSGAT), and 2668 to 2679 (NPRSGRSPTGNT). Phosphoserine is present on residues serine 2671 and serine 2674. Residues 2674–2843 (SPTGNTPPVI…HSGSYLVTSV (170 aa)) form an interaction with MAPRE1 region. Phosphothreonine is present on threonine 2679. Serine 2710 and serine 2724 each carry phosphoserine. The segment at 2729-2843 (DAPDQKGTEI…HSGSYLVTSV (115 aa)) is disordered. Over residues 2741-2757 (GQNNPVPVSETNESSIV) the composition is skewed to polar residues. Over residues 2763–2774 (SSSSSSKHSSPS) the composition is skewed to low complexity. Residues 2784-2812 (FNYNPSPRKSSADSTSARPSQIPTPVNNN) are compositionally biased toward polar residues. Residue serine 2789 is modified to Phosphoserine. The Microtubule tip localization signal signature appears at 2803 to 2806 (SQIP). The short motif at 2841–2843 (TSV) is the PDZ-binding element.

The protein belongs to the adenomatous polyposis coli (APC) family. Forms homooligomers. Found in a complex consisting of ARHGEF4, APC and CTNNB1. Found in a complex composed of MACF1, APC, AXIN1, CTNNB1 and GSK3B. The complex composed, at least, of APC, CTNNB1 and GSK3B interacts with JPT1; the interaction requires the inactive form of GSK3B (phosphorylated at 'Ser-9'). Interacts with APC2. Interacts with DLG1 (via PDZ domains) and DLG3 (via PDZ domains). Interacts with alpha- and beta-catenins. Interacts with AXIN1 (via RGS domain). Interacts with ARHGEF4 (via N-terminus). Interacts (via C-terminal residues 2674-2843) with MAPRE1 (via C-terminal residues 206-211); the interaction inhibits association with and bundling of F-actin. Interacts with MAPRE2 and MAPRE3 (via C-terminus). Interacts with DIAPH1; DIAPH1 acts as a scaffold protein for MAPRE1 and APC to stabilize microtubules and promote cell migration. Interacts with DIAPH2. Interacts with SCRIB; may mediate APC targeting to adherens junctions of epithelial cells. Interacts with SPATA13 (via N-terminus and SH3 domain). Interacts with ASAP1 (via SH3 domain). Interacts (at the cell membrane) with AMER1 and AMER2 (via ARM repeats). Interacts with KHDRBS1. Interacts with actin; binds both to F-actin and actin filament bundles. Phosphorylated; phosphorylation enhances the F-actin bundling activity. Phosphorylated by GSK3B. Post-translationally, ubiquitinated, leading to its degradation by the proteasome. Ubiquitination is facilitated by Axin. Deubiquitinated by ZRANB1/TRABID. As to expression, expressed in a variety of tissues: brain, small intestine, colon, thymus, skeletal muscle, heart, prostate, lung, spleen, ovary, testis kidney, placenta, blood and liver. Isoform 1A: Very strongly expressed in brain but has relatively low expression levels in other tissues. Isoform 1B: Predominant form in all tissues except for brain, including gastric mucosa and blood.

It localises to the cell junction. The protein localises to the adherens junction. The protein resides in the cytoplasm. Its subcellular location is the cytoskeleton. It is found in the cell projection. It localises to the lamellipodium. The protein localises to the ruffle membrane. The protein resides in the cell membrane. Functionally, tumor suppressor. Promotes rapid degradation of CTNNB1 and participates in Wnt signaling as a negative regulator. APC activity is correlated with its phosphorylation state. Activates the GEF activity of SPATA13 and ARHGEF4. Plays a role in hepatocyte growth factor (HGF)-induced cell migration. Required for MMP9 up-regulation via the JNK signaling pathway in colorectal tumor cells. Associates with both microtubules and actin filaments, components of the cytoskeleton. Plays a role in mediating the organization of F-actin into ordered bundles. Functions downstream of Rho GTPases and DIAPH1 to selectively stabilize microtubules. Acts as a mediator of ERBB2-dependent stabilization of microtubules at the cell cortex. It is required for the localization of MACF1 to the cell membrane and this localization of MACF1 is critical for its function in microtubule stabilization. The protein is Adenomatous polyposis coli protein of Homo sapiens (Human).